The chain runs to 611 residues: Serine/arginine repetitive matrix protein 4 (611 aa).

Disordered stretches follow at residues 38-248 (ARKP…PLQM) and 263-611 (SAAD…STRR). 2 stretches are compositionally biased toward basic residues: residues 107–123 (RGKKKKKKSTRKKRRRS) and 131–189 (VKKK…HRCP). Positions 190 to 202 (SRSQSSESRPSSC) are enriched in low complexity. Residues 203-216 (ESRHRGRSPEEGQK) are compositionally biased toward basic and acidic residues. The span at 217 to 226 (SRRRHSRRCS) shows a compositional bias: basic residues. The segment covering 270 to 290 (KTASPLTTSRGRSQEYDSGND) has biased composition (polar residues). Low complexity predominate over residues 291–301 (TSSPPSTQTSS). Polar residues predominate over residues 322 to 341 (LNSGNTSDSGNSFTTSSPQN). Low complexity-rich tracts occupy residues 390 to 422 (SRSSSYASTRSSSHSSRSPNPRASPRYTQSRST) and 430 to 461 (SRSPSYSSKSGKRSPPSRSSRSRRSPSYSRYS). A compositionally biased stretch (basic and acidic residues) spans 462 to 482 (PSRERDPKYSEKDSQQRERER). Basic residues predominate over residues 483–498 (ARRRRRSYSPMRKRRR). Basic and acidic residues predominate over residues 499-508 (DSPSHLEARR). Residues 522–549 (PSPSSSGSLSSTSSWYSSSSSRSASRSY) are compositionally biased toward low complexity. Over residues 550 to 564 (SRSRSRSRSRRRSRT) the composition is skewed to basic residues. Low complexity predominate over residues 565-580 (RTSSSSSSRSPSPGSR). Residues 581 to 595 (SRSRSRSRSRSRSRS) show a composition bias toward basic residues. Positions 596-611 (QSRSYSSADSYSSTRR) are enriched in low complexity.

It belongs to the nSR100 family. Post-translationally, phosphorylated. In terms of tissue distribution, specifically expressed in neuronal cells (at protein level). Expressed in the cerebellum.

The protein resides in the nucleus. Splicing factor specifically required for neural cell differentiation. Acts in conjunction with nPTB/PTBP2 by binding directly to its regulated target transcripts and promotes neural-specific exon inclusion in many genes that function in neural cell differentiation. Required to promote the inclusion of neural-specific exon 10 in nPTB/PTBP2, leading to increased expression of neural-specific nPTB/PTBP2. Also promotes the inclusion of exon 16 in DAAM1 in neuron extracts. Promotes alternative splicing of REST transcripts to produce REST isoform 3 (REST4) with greatly reduced repressive activity, thereby activating expression of REST targets in neural cells. Plays an important role during embryonic development as well as in the proper functioning of the adult nervous system. Regulates alternative splicing events in genes with important neuronal functions. The polypeptide is Serine/arginine repetitive matrix protein 4 (SRRM4) (Homo sapiens (Human)).